Reading from the N-terminus, the 197-residue chain is Shikimate kinase (197 aa).

Residue 15–20 (GSGKSS) participates in ATP binding. Serine 19 lines the Mg(2+) pocket. Aspartate 37, arginine 61, and glycine 83 together coordinate substrate. Arginine 121 lines the ATP pocket. Substrate is bound at residue arginine 148.

This sequence belongs to the shikimate kinase family. As to quaternary structure, monomer. Mg(2+) is required as a cofactor.

It is found in the cytoplasm. It catalyses the reaction shikimate + ATP = 3-phosphoshikimate + ADP + H(+). It functions in the pathway metabolic intermediate biosynthesis; chorismate biosynthesis; chorismate from D-erythrose 4-phosphate and phosphoenolpyruvate: step 5/7. Functionally, catalyzes the specific phosphorylation of the 3-hydroxyl group of shikimic acid using ATP as a cosubstrate. The polypeptide is Shikimate kinase (Chlorobium phaeovibrioides (strain DSM 265 / 1930) (Prosthecochloris vibrioformis (strain DSM 265))).